Here is a 460-residue protein sequence, read N- to C-terminus: tRNA (guanine(10)-N(2))-methyltransferase TRMT11 (460 aa).

Position 2 is an N-acetylalanine (alanine 2).

Belongs to the class I-like SAM-binding methyltransferase superfamily. TRM11 methyltransferase family. In terms of assembly, part of the heterodimeric TRMT11-TRM112 methyltransferase complex; this complex forms an active tRNA methyltransferase, where TRMT112 acts as an activator of the catalytic subunit TRMT11.

The protein resides in the cytoplasm. It carries out the reaction guanosine(10) in tRNA + S-adenosyl-L-methionine = N(2)-methylguanosine(10) in tRNA + S-adenosyl-L-homocysteine + H(+). Its function is as follows. Catalytic subunit of the TRMT11-TRM112 methyltransferase complex, that specifically mediates the S-adenosyl-L-methionine-dependent N(2)-methylation of guanosine nucleotide at position 10 (m2G10) in tRNAs. This is one of the major tRNA (guanine-N(2))-methyltransferases. The chain is tRNA (guanine(10)-N(2))-methyltransferase TRMT11 from Mus musculus (Mouse).